A 525-amino-acid chain; its full sequence is Light-independent protochlorophyllide reductase subunit B (525 aa).

Residue Asp36 coordinates [4Fe-4S] cluster. The active-site Proton donor is Asp274. 409 to 410 (GL) lines the substrate pocket. Residues 433 to 464 (HGGKAVAREESPVAPADLAPAATSDTPAAPSP) form a disordered region. Positions 444 to 464 (PVAPADLAPAATSDTPAAPSP) are enriched in low complexity.

Belongs to the ChlB/BchB/BchZ family. Protochlorophyllide reductase is composed of three subunits; BchL, BchN and BchB. Forms a heterotetramer of two BchB and two BchN subunits. Requires [4Fe-4S] cluster as cofactor.

The catalysed reaction is chlorophyllide a + oxidized 2[4Fe-4S]-[ferredoxin] + 2 ADP + 2 phosphate = protochlorophyllide a + reduced 2[4Fe-4S]-[ferredoxin] + 2 ATP + 2 H2O. It participates in porphyrin-containing compound metabolism; bacteriochlorophyll biosynthesis (light-independent). In terms of biological role, component of the dark-operative protochlorophyllide reductase (DPOR) that uses Mg-ATP and reduced ferredoxin to reduce ring D of protochlorophyllide (Pchlide) to form chlorophyllide a (Chlide). This reaction is light-independent. The NB-protein (BchN-BchB) is the catalytic component of the complex. The sequence is that of Light-independent protochlorophyllide reductase subunit B from Rhodobacter capsulatus (strain ATCC BAA-309 / NBRC 16581 / SB1003).